A 109-amino-acid polypeptide reads, in one-letter code: Set1 complex component sdc1 (109 aa).

Residues 49–109 form a disordered region; sequence QQKQKEIVNQ…SSNPGKNSAS (61 aa). Over residues 73-87 the composition is skewed to polar residues; sequence STPTMAEQVQTSFSN. Residues 88–101 are compositionally biased toward low complexity; the sequence is PASTPLTQTSSPSS.

This sequence belongs to the dpy-30 family. Component of the COMPASS (Set1C) complex composed of ash2, sdc1, set1, shg1, spp1, swd1, swd2 and swd3. Component of the Lid2 complex composed of ash2, jmj3, lid2, sdc1 and snt2.

Its subcellular location is the nucleus. In terms of biological role, the COMPASS (Set1C) complex specifically mono-, di- and trimethylates histone H3 to form H3K4me1/2/3, which subsequently activates gene expression by regulating transcription elongation and plays a role in telomere length maintenance. The polypeptide is Set1 complex component sdc1 (sdc1) (Schizosaccharomyces pombe (strain 972 / ATCC 24843) (Fission yeast)).